An 885-amino-acid polypeptide reads, in one-letter code: Glycerol-3-phosphate acyltransferase (885 aa).

Residues 1–17 (MPEQNPLPFPDGQPSPP) show a composition bias toward pro residues. A disordered region spans residues 1 to 26 (MPEQNPLPFPDGQPSPPSTAAADTGA). Positions 362–367 (HRSHMD) match the HXXXXD motif motif.

The protein belongs to the GPAT/DAPAT family.

The protein resides in the cell inner membrane. The enzyme catalyses sn-glycerol 3-phosphate + an acyl-CoA = a 1-acyl-sn-glycero-3-phosphate + CoA. Its pathway is phospholipid metabolism; CDP-diacylglycerol biosynthesis; CDP-diacylglycerol from sn-glycerol 3-phosphate: step 1/3. In Xanthomonas axonopodis pv. citri (strain 306), this protein is Glycerol-3-phosphate acyltransferase.